A 292-amino-acid polypeptide reads, in one-letter code: Putative pyruvate, phosphate dikinase regulatory protein (292 aa).

Residue 155–162 (GVSRSSKT) participates in ADP binding.

This sequence belongs to the pyruvate, phosphate/water dikinase regulatory protein family. PDRP subfamily.

The enzyme catalyses N(tele)-phospho-L-histidyl/L-threonyl-[pyruvate, phosphate dikinase] + ADP = N(tele)-phospho-L-histidyl/O-phospho-L-threonyl-[pyruvate, phosphate dikinase] + AMP + H(+). It catalyses the reaction N(tele)-phospho-L-histidyl/O-phospho-L-threonyl-[pyruvate, phosphate dikinase] + phosphate + H(+) = N(tele)-phospho-L-histidyl/L-threonyl-[pyruvate, phosphate dikinase] + diphosphate. Bifunctional serine/threonine kinase and phosphorylase involved in the regulation of the pyruvate, phosphate dikinase (PPDK) by catalyzing its phosphorylation/dephosphorylation. This Acidiphilium cryptum (strain JF-5) protein is Putative pyruvate, phosphate dikinase regulatory protein.